A 124-amino-acid chain; its full sequence is Small ribosomal subunit protein uS12 (124 aa).

Asp-89 carries the post-translational modification 3-methylthioaspartic acid.

The protein belongs to the universal ribosomal protein uS12 family. As to quaternary structure, part of the 30S ribosomal subunit. Contacts proteins S8 and S17. May interact with IF1 in the 30S initiation complex.

In terms of biological role, with S4 and S5 plays an important role in translational accuracy. Interacts with and stabilizes bases of the 16S rRNA that are involved in tRNA selection in the A site and with the mRNA backbone. Located at the interface of the 30S and 50S subunits, it traverses the body of the 30S subunit contacting proteins on the other side and probably holding the rRNA structure together. The combined cluster of proteins S8, S12 and S17 appears to hold together the shoulder and platform of the 30S subunit. The chain is Small ribosomal subunit protein uS12 from Acinetobacter baumannii (strain AB307-0294).